The following is a 207-amino-acid chain: Ras-related protein Rab-7a (207 aa).

At Thr2 the chain carries N-acetylthreonine. The GTP site is built by Ser17, Gly18, Val19, Gly20, Lys21, Thr22, Ser23, Ser34, Asn35, Tyr37, and Thr40. Thr22 provides a ligand contact to Mg(2+). The short motif at 28–41 (YVNKKFSNQYKATI) is the Switch 1 element. The Mg(2+) site is built by Thr40 and Asp63. Gly66 is a binding site for GTP. A Switch 2 motif is present at residues 67-82 (QERFQSLSVAFYRGAD). Ser72 is modified (phosphoserine). Residues Asn125, Lys126, Asp128, Ala156, and Lys157 each coordinate GTP. Residues Lys191 and Lys194 each participate in a glycyl lysine isopeptide (Lys-Gly) (interchain with G-Cter in ubiquitin) cross-link. Residues Cys205 and Cys207 are each lipidated (S-geranylgeranyl cysteine). Cys207 bears the Cysteine methyl ester mark.

The protein belongs to the small GTPase superfamily. Rab family. Interacts with NTRK1/TRKA. Interacts with RILP. Interacts with PSMA7. Interacts with RNF115. Interacts with FYCO1. Interacts with the PIK3C3/VPS34-PIK3R4 complex. The GTP-bound form interacts with OSBPL1A. The GTP-bound form interacts with RAC1. Interacts with CLN3. Interacts with CHM, the substrate-binding subunit of the Rab geranylgeranyltransferase complex. Interacts with C9orf72. Does not interact with HPS4 and the BLOC-3 complex (heterodimer of HPS1 and HPS4). Interacts with CLN5. Interacts with PLEKHM1 (via N- and C-terminus). Interacts with PRPH; the interaction is direct. Interacts with VPS13A. The GDP-bound form interacts with RIMOC1. Interacts with the MON1A-CCZ1B complex and this interaction is enhanced in the presence of RIMOC1. Interacts with VPS39 and VPS41. Forms a ternary complex with LAMP2 and RUFY4; the interaction with LAMP2 is mediated by RUFY4 (via RUN and coiled coil domains). It depends on Mg(2+) as a cofactor. In terms of processing, deubiquitination at Lys-191 and Lys-194 by USP32. Phosphorylated at Ser-72 by LRRK1; phosphorylation is dependent on protein kinase C (PKC) activation of LRRK1. Post-translationally, prenylated. Prenylation is required for association with cellular membranes.

It is found in the cytoplasmic vesicle. It localises to the phagosome membrane. The protein localises to the late endosome membrane. The protein resides in the lysosome membrane. Its subcellular location is the melanosome membrane. It is found in the autophagosome membrane. It localises to the lipid droplet. The protein localises to the endosome membrane. The protein resides in the mitochondrion membrane. The catalysed reaction is GTP + H2O = GDP + phosphate + H(+). Its activity is regulated as follows. Regulated by guanine nucleotide exchange factors (GEFs) which promote the exchange of bound GDP for free GTP. Regulated by GTPase activating proteins (GAPs) which increase the GTP hydrolysis activity. Inhibited by GDP dissociation inhibitors (GDIs). The small GTPases Rab are key regulators of intracellular membrane trafficking, from the formation of transport vesicles to their fusion with membranes. Rabs cycle between an inactive GDP-bound form and an active GTP-bound form that is able to recruit to membranes different sets of downstream effectors directly responsible for vesicle formation, movement, tethering and fusion. In its active state, RAB7A binds to a variety of effector proteins playing a key role in the regulation of endo-lysosomal trafficking. Governs early-to-late endosomal maturation, microtubule minus-end as well as plus-end directed endosomal migration and positioning, and endosome-lysosome transport through different protein-protein interaction cascades. Also plays a central role in growth-factor-mediated cell signaling, nutrient-transporter-mediated nutrient uptake, neurotrophin transport in the axons of neurons and lipid metabolism. Also involved in regulation of some specialized endosomal membrane trafficking, such as maturation of melanosomes, pathogen-induced phagosomes (or vacuoles) and autophagosomes. Plays a role in the maturation and acidification of phagosomes that engulf pathogens, such as S.aureus and Mycobacteria. Plays a role in the fusion of phagosomes with lysosomes. In concert with RAC1, plays a role in regulating the formation of RBs (ruffled borders) in osteoclasts. Controls the endosomal trafficking and neurite outgrowth signaling of NTRK1/TRKA. Regulates the endocytic trafficking of the EGF-EGFR complex by regulating its lysosomal degradation. Involved in the ADRB2-stimulated lipolysis through lipophagy, a cytosolic lipase-independent autophagic pathway. Required for the exosomal release of SDCBP, CD63 and syndecan. Required for vesicular trafficking and cell surface expression of ACE2. May play a role in PRPH neuronal intermediate filament assembly. The protein is Ras-related protein Rab-7a (RAB7A) of Oryctolagus cuniculus (Rabbit).